The following is a 359-amino-acid chain: MMNIKTNPFKAVSFVESAIKKALDNAGYLIAEIKYDGVRGNICVDNTANSYWLSRVSKTIPALEHLNGFDVRWKRLLNDDRCFYKDGFMLDGELMVKGVDFNTGSGLLRTKWTDTKNQEFHEELFVEPIRKKDKVPFKLHTGHLHIKLYAILPLHIVESGEDCDVMTLLMQEHVKNMLPLLQEYFPEIEWQAAESYEVYDMVELQQLYEQKRAEGHEGLIVKDPMCIYKRGKKSGWWKMKPENEADGIIQGLVWGTKGLANEGKVIGFEVLLESGRLVNATNISRALMDEFTETVKEATLSQWGFFSPYGIGDNDACTINPYDGWACQISYMEETPDGSLRHPSFVMFRGTEDNPQEKM.

Residues 32 to 35 (EIKY), arginine 39, 55 to 57 (RVS), and glutamate 93 contribute to the ATP site. Lysine 34 acts as the N6-AMP-lysine intermediate in catalysis. An a divalent metal cation-binding site is contributed by glutamate 217. Lysine 232 and lysine 238 together coordinate ATP.

Belongs to the ATP-dependent DNA ligase family. Requires a divalent metal cation as cofactor.

It catalyses the reaction ATP + (deoxyribonucleotide)n-3'-hydroxyl + 5'-phospho-(deoxyribonucleotide)m = (deoxyribonucleotide)n+m + AMP + diphosphate.. DNA ligase that seals nicks in double-stranded DNA during DNA replication, DNA recombination and DNA repair in an ATP-dependent reaction. Binds specifically to DNA nicks containing a 3'-OH and a 5'-phosphate group. The protein is DNA ligase of Escherichia phage T7 (Bacteriophage T7).